Consider the following 220-residue polypeptide: Deoxyribose-phosphate aldolase 1 (220 aa).

Aspartate 89 (proton donor/acceptor) is an active-site residue. The active-site Schiff-base intermediate with acetaldehyde is the lysine 151. Lysine 180 serves as the catalytic Proton donor/acceptor.

The protein belongs to the DeoC/FbaB aldolase family. DeoC type 1 subfamily.

Its subcellular location is the cytoplasm. It catalyses the reaction 2-deoxy-D-ribose 5-phosphate = D-glyceraldehyde 3-phosphate + acetaldehyde. The protein operates within carbohydrate degradation; 2-deoxy-D-ribose 1-phosphate degradation; D-glyceraldehyde 3-phosphate and acetaldehyde from 2-deoxy-alpha-D-ribose 1-phosphate: step 2/2. In terms of biological role, catalyzes a reversible aldol reaction between acetaldehyde and D-glyceraldehyde 3-phosphate to generate 2-deoxy-D-ribose 5-phosphate. In Mesoplasma florum (strain ATCC 33453 / NBRC 100688 / NCTC 11704 / L1) (Acholeplasma florum), this protein is Deoxyribose-phosphate aldolase 1.